We begin with the raw amino-acid sequence, 349 residues long: Phosphoribosylformylglycinamidine cyclo-ligase (349 aa).

The protein belongs to the AIR synthase family.

Its subcellular location is the cytoplasm. The enzyme catalyses 2-formamido-N(1)-(5-O-phospho-beta-D-ribosyl)acetamidine + ATP = 5-amino-1-(5-phospho-beta-D-ribosyl)imidazole + ADP + phosphate + H(+). It functions in the pathway purine metabolism; IMP biosynthesis via de novo pathway; 5-amino-1-(5-phospho-D-ribosyl)imidazole from N(2)-formyl-N(1)-(5-phospho-D-ribosyl)glycinamide: step 2/2. The polypeptide is Phosphoribosylformylglycinamidine cyclo-ligase (Lactobacillus delbrueckii subsp. bulgaricus (strain ATCC BAA-365 / Lb-18)).